The primary structure comprises 322 residues: Probable cell division protein WhiA (322 aa).

The H-T-H motif DNA-binding region spans 279–312 (SLKELGELWTPPVGKSGVNHRIRKIERLAEKLRS).

This sequence belongs to the WhiA family.

In terms of biological role, involved in cell division and chromosome segregation. The protein is Probable cell division protein WhiA of Desulforamulus reducens (strain ATCC BAA-1160 / DSM 100696 / MI-1) (Desulfotomaculum reducens).